The primary structure comprises 1067 residues: UPF0507 protein KLLA0D01133g (1067 aa).

One can recognise a VPS9 domain in the interval 280 to 432 (IVEDQELEHR…FHQDTVDSLT (153 aa)).

The protein belongs to the UPF0507 family.

In Kluyveromyces lactis (strain ATCC 8585 / CBS 2359 / DSM 70799 / NBRC 1267 / NRRL Y-1140 / WM37) (Yeast), this protein is UPF0507 protein KLLA0D01133g.